The chain runs to 122 residues: Large ribosomal subunit protein uL14 (122 aa).

The protein belongs to the universal ribosomal protein uL14 family. In terms of assembly, part of the 50S ribosomal subunit. Forms a cluster with proteins L3 and L19. In the 70S ribosome, L14 and L19 interact and together make contacts with the 16S rRNA in bridges B5 and B8.

Its function is as follows. Binds to 23S rRNA. Forms part of two intersubunit bridges in the 70S ribosome. The sequence is that of Large ribosomal subunit protein uL14 from Salinibacter ruber (strain DSM 13855 / M31).